The chain runs to 450 residues: Grayanic acid biosynthesis cluster O-methyltransferase (450 aa).

D254 lines the S-adenosyl-L-methionine pocket. The active-site Proton acceptor is H301.

This sequence belongs to the class I-like SAM-binding methyltransferase superfamily. Cation-independent O-methyltransferase family. COMT subfamily.

It participates in secondary metabolite biosynthesis. In terms of biological role, non-reducing polyketide synthase; part of the gene cluster that mediates the biosynthesis of orcinol depsidone grayanic acid (GRA), the only major secondary metabolite known in C.grayi. The first step consists in the ring and depside synthesis by PKS16 leading to 4-O-demethylsphaerophorin, involving different orcinol-like rings, one with acetyl CoA and the other with octanoyl CoA as the starter. Further depsidone formation by the GRA cluster-specific cytochrome P450 leads to 4-O-demethylgrayanic acid. Finally, the cluster specific O-methyltransferase probably converts the 4-O-demethylgrayanic acid into grayanic acid. This chain is Grayanic acid biosynthesis cluster O-methyltransferase, found in Cladonia grayi (Gray's cup lichen).